The chain runs to 543 residues: Formin-binding protein 1-like (543 aa).

In terms of domain architecture, F-BAR spans 1–263; sequence MSWGTELWDQ…AAKSVDERRD (263 aa). Coiled-coil stretches lie at residues 66 to 258 and 334 to 426; these read FTSC…AKSV and LEDF…QRSE. Residues 339 to 416 enclose the REM-1 domain; it reads HLPPEQRRKR…IHKNEGWLSE (78 aa). Residues 424-467 form a disordered region; sequence RSERRHSAEANHLVAQGRESPEGSYTEDANQEGRVQPQHHAHPE. The SH3 domain maps to 479–540; that stretch reads PAIGHCKSLY…PTSYIEITLE (62 aa).

The protein belongs to the FNBP1 family. In terms of assembly, homodimerizes, the dimers can polymerize end-to-end to form filamentous structures. Interacts with GTP-bound cdc42 and wasl/n-wasp.

It localises to the cytoplasm. Its subcellular location is the cytoskeleton. The protein localises to the cell cortex. The protein resides in the cytoplasmic vesicle. It is found in the cell membrane. Required to coordinate membrane tubulation with reorganization of the actin cytoskeleton during endocytosis. Essential for autophagy of intracellular bacterial pathogens. Promotes cdc42-induced actin polymerization by activating the wasl-waspip complex, the predominant form of wasl/n-wasp in cells. This chain is Formin-binding protein 1-like (fnbp1l), found in Xenopus laevis (African clawed frog).